The primary structure comprises 424 residues: MLQLATYLHSQGISITIAQYPNFNSPDSSNHPELTFLPLSSGNLSVADISGGFFKFIQTLNHNCKPHFREYLVQNMSSDDKESIVIIRDNLMFFAGEIAGELGLPSIILRGSNAVMLTASDIIPQLHQEGRFPPPDSLLQETIPELVPFRYKDLPFIGYPIHQTLEFSITMMTPKSPASAILINTLEFLEQSALTQIRDHYKVPVFTIGPLHKIVTTRSTSILEEDTSCINWLDKQSPKSVVYVSLGSLAKLDEKVASEMACGLAMSNHKFLWVVRPGMVHGFEWVEFLPDSLVGEMKARGLIVKWAPQTTVLAHNAVGGFWSHCGWNSTIECLAEGVPMMCQPFFADQLLNARYVSDVWKTGFEIVIEKGEIACAIKRVLVDEEGEEMRQRAMEIKEKVKIAINDGGSSYDSFKDLVAFISSL.

Residues Ser248, 306 to 307 (WA), 324 to 332 (HCGWNSTIE), and 346 to 349 (FADQ) each bind UDP-alpha-D-glucose.

The protein belongs to the UDP-glycosyltransferase family.

May glycosylate diterpenes or flavonols in leaves. In Stevia rebaudiana (Stevia), this protein is UDP-glycosyltransferase 76H1.